We begin with the raw amino-acid sequence, 255 residues long: 1-(5-phosphoribosyl)-5-[(5-phosphoribosylamino)methylideneamino] imidazole-4-carboxamide isomerase (255 aa).

The active-site Proton acceptor is the Asp8. The Proton donor role is filled by Asp129.

It belongs to the HisA/HisF family.

It is found in the cytoplasm. The enzyme catalyses 1-(5-phospho-beta-D-ribosyl)-5-[(5-phospho-beta-D-ribosylamino)methylideneamino]imidazole-4-carboxamide = 5-[(5-phospho-1-deoxy-D-ribulos-1-ylimino)methylamino]-1-(5-phospho-beta-D-ribosyl)imidazole-4-carboxamide. It participates in amino-acid biosynthesis; L-histidine biosynthesis; L-histidine from 5-phospho-alpha-D-ribose 1-diphosphate: step 4/9. The sequence is that of 1-(5-phosphoribosyl)-5-[(5-phosphoribosylamino)methylideneamino] imidazole-4-carboxamide isomerase from Prochlorococcus marinus subsp. pastoris (strain CCMP1986 / NIES-2087 / MED4).